The chain runs to 131 residues: Large ribosomal subunit protein bL21 (131 aa).

It belongs to the bacterial ribosomal protein bL21 family. In terms of assembly, part of the 50S ribosomal subunit. Contacts protein L20.

Its function is as follows. This protein binds to 23S rRNA in the presence of protein L20. In Cereibacter sphaeroides (strain ATCC 17023 / DSM 158 / JCM 6121 / CCUG 31486 / LMG 2827 / NBRC 12203 / NCIMB 8253 / ATH 2.4.1.) (Rhodobacter sphaeroides), this protein is Large ribosomal subunit protein bL21.